We begin with the raw amino-acid sequence, 100 residues long: Large ribosomal subunit protein uL23 (100 aa).

Belongs to the universal ribosomal protein uL23 family. As to quaternary structure, part of the 50S ribosomal subunit. Contacts protein L29, and trigger factor when it is bound to the ribosome.

One of the early assembly proteins it binds 23S rRNA. One of the proteins that surrounds the polypeptide exit tunnel on the outside of the ribosome. Forms the main docking site for trigger factor binding to the ribosome. This chain is Large ribosomal subunit protein uL23, found in Mycobacterium marinum (strain ATCC BAA-535 / M).